A 214-amino-acid chain; its full sequence is Ribosomal RNA large subunit methyltransferase E (214 aa).

Positions 60, 62, 86, 102, and 127 each coordinate S-adenosyl-L-methionine. Residue Lys167 is the Proton acceptor of the active site.

It belongs to the class I-like SAM-binding methyltransferase superfamily. RNA methyltransferase RlmE family.

It localises to the cytoplasm. It catalyses the reaction uridine(2552) in 23S rRNA + S-adenosyl-L-methionine = 2'-O-methyluridine(2552) in 23S rRNA + S-adenosyl-L-homocysteine + H(+). In terms of biological role, specifically methylates the uridine in position 2552 of 23S rRNA at the 2'-O position of the ribose in the fully assembled 50S ribosomal subunit. The sequence is that of Ribosomal RNA large subunit methyltransferase E from Herminiimonas arsenicoxydans.